A 122-amino-acid chain; its full sequence is uncharacterized protein (122 aa).

The stretch at 46 to 116 (KDLQKEVDDL…HQLENKRELN (71 aa)) forms a coiled coil.

This is an uncharacterized protein from Invertebrate iridescent virus 6 (IIV-6).